The chain runs to 550 residues: MSSDITGTAAWQKLRDHHAQIQSVHLRELFEKDPARGQELTVTAGDLYIDYSKHRIDRDTLGLLLELARSADLEARRDAMFAGEHINTSEDRAVLHTALRLPADASLVVDGQDVVADVHEVLDRMGDFTDRVRSGEWRGATGERIKTVVNIGIGGSDLGPVMVYRALRHYADAGISVRFISNVDPADLVRSLQGLDPATTLFIVASKTFSTLETLTNATAARRWLLGGLGLGNEAVAKHFVAVSTHADRVAEFGIDTANMFGFWDWVGGRYSVDSAIGLSVMAAIGKERFAEFLAGFHAVDEHFRTAPLEENAPVLLGLIGLWYSNFFGAESRAVLPYSNDLVRFAAYLQQLTMESNGKSVRADGTPVPTSTGEIFWGEPGTNGQHAFYQLLHQGTRLVPSDFIGFGEPTDDLPTADGTGSMHDLLMSNFFAQTKVLAFGKTAEEIAAEGTPEHLVPHKVMPGNRPSTTILAPKLTPSVIGQLIALYEHQVFVEGVVWGIDSFDQWGVELGKTQAVELQPVLTAAEEPAAQSDSSTDSLVRWYRRQRGRA.

Glu355 (proton donor) is an active-site residue. Residues His386 and Lys512 contribute to the active site.

This sequence belongs to the GPI family.

It is found in the cytoplasm. It carries out the reaction alpha-D-glucose 6-phosphate = beta-D-fructose 6-phosphate. It participates in carbohydrate biosynthesis; gluconeogenesis. It functions in the pathway carbohydrate degradation; glycolysis; D-glyceraldehyde 3-phosphate and glycerone phosphate from D-glucose: step 2/4. Its function is as follows. Catalyzes the reversible isomerization of glucose-6-phosphate to fructose-6-phosphate. This chain is Glucose-6-phosphate isomerase 1, found in Rhodococcus jostii (strain RHA1).